Reading from the N-terminus, the 156-residue chain is Regulatory protein RecX (156 aa).

This sequence belongs to the RecX family.

The protein resides in the cytoplasm. Functionally, modulates RecA activity. This Pseudomonas putida (strain GB-1) protein is Regulatory protein RecX.